A 437-amino-acid chain; its full sequence is GTPase Der (437 aa).

EngA-type G domains follow at residues 4-168 (NIVA…PEKP) and 178-353 (PRFA…ENRK). GTP-binding positions include 10-17 (GRPNVGKS), 57-61 (DTGGY), 120-123 (NKVD), 184-191 (GRPNAGKS), 231-235 (DTAGI), and 296-299 (NKWD). The 84-residue stretch at 354-437 (QRISTSKFNE…VPIDIYIREK (84 aa)) folds into the KH-like domain.

This sequence belongs to the TRAFAC class TrmE-Era-EngA-EngB-Septin-like GTPase superfamily. EngA (Der) GTPase family. Associates with the 50S ribosomal subunit.

Its function is as follows. GTPase that plays an essential role in the late steps of ribosome biogenesis. The protein is GTPase Der of Flavobacterium johnsoniae (strain ATCC 17061 / DSM 2064 / JCM 8514 / BCRC 14874 / CCUG 350202 / NBRC 14942 / NCIMB 11054 / UW101) (Cytophaga johnsonae).